Here is a 386-residue protein sequence, read N- to C-terminus: Probable serine/threonine-protein kinase PBL23 (386 aa).

The S-palmitoyl cysteine moiety is linked to residue Cys-5. A Protein kinase domain is found at Phe-82–Leu-360. ATP contacts are provided by residues Leu-88–Val-96 and Lys-111. The active-site Proton acceptor is Asp-210. The tract at residues Thr-365–Leu-386 is disordered. Residues Asp-368–Leu-386 are compositionally biased toward acidic residues.

The protein belongs to the protein kinase superfamily. Ser/Thr protein kinase family.

It localises to the cell membrane. The enzyme catalyses L-seryl-[protein] + ATP = O-phospho-L-seryl-[protein] + ADP + H(+). It carries out the reaction L-threonyl-[protein] + ATP = O-phospho-L-threonyl-[protein] + ADP + H(+). In terms of biological role, may be involved in plant defense signaling. The polypeptide is Probable serine/threonine-protein kinase PBL23 (Arabidopsis thaliana (Mouse-ear cress)).